We begin with the raw amino-acid sequence, 399 residues long: Probable peptidoglycan glycosyltransferase FtsW (399 aa).

Residues 1–25 lie on the Cytoplasmic side of the membrane; it reads MTAAAPSKPLPRTPRVRQAYPLDYP. Residues 26–46 form a helical membrane-spanning segment; that stretch reads LLLCALGLLAFGWVMVTSASM. At 47–64 the chain is on the periplasmic side; it reads SIAEACCQNPFHYSIRHA. Residues 65 to 85 traverse the membrane as a helical segment; it reads IALGLALMLGLMAYSVPSHWW. At 86–88 the chain is on the cytoplasmic side; the sequence is ERH. A helical membrane pass occupies residues 89 to 109; it reads GVWLFLASALVLILVLIPGIG. Residues 110-117 lie on the Periplasmic side of the membrane; sequence RTVNGATR. Residues 118–138 traverse the membrane as a helical segment; sequence WIPLGPLNVQPSEFVKLFAIL. At 139 to 153 the chain is on the cytoplasmic side; sequence YVAGYLVRHADKVVN. Residues 154–174 form a helical membrane-spanning segment; the sequence is QLSGFIRPLILIGAAALLILM. The Periplasmic portion of the chain corresponds to 175–177; it reads QPD. The next 2 membrane-spanning stretches (helical) occupy residues 178 to 198 and 199 to 219; these read FGTT…GGAS and LLPF…LVIF. Residues 220 to 281 lie on the Periplasmic side of the membrane; that stretch reads SPYRLERVVS…PEAHTDFLPS (62 aa). A helical transmembrane segment spans residues 282 to 302; it reads VIGEELGLAGMLVLIAAFVFL. Topologically, residues 303 to 326 are cytoplasmic; it reads SWRAMSIGVRAEALKRPFESYVAQ. The helical transmembrane segment at 327-347 threads the bilayer; the sequence is GIGLWIGLQSFVNLGVNVGIL. Over 348–353 the chain is Periplasmic; the sequence is PTKGLT. A helical transmembrane segment spans residues 354 to 374; the sequence is LPFMSYGSNSLMVGCMAVAIL. The Cytoplasmic portion of the chain corresponds to 375 to 399; the sequence is LRIDVMLRRVESEAKFKRGTPWSRA.

It belongs to the SEDS family. FtsW subfamily.

It localises to the cell inner membrane. The enzyme catalyses [GlcNAc-(1-&gt;4)-Mur2Ac(oyl-L-Ala-gamma-D-Glu-L-Lys-D-Ala-D-Ala)](n)-di-trans,octa-cis-undecaprenyl diphosphate + beta-D-GlcNAc-(1-&gt;4)-Mur2Ac(oyl-L-Ala-gamma-D-Glu-L-Lys-D-Ala-D-Ala)-di-trans,octa-cis-undecaprenyl diphosphate = [GlcNAc-(1-&gt;4)-Mur2Ac(oyl-L-Ala-gamma-D-Glu-L-Lys-D-Ala-D-Ala)](n+1)-di-trans,octa-cis-undecaprenyl diphosphate + di-trans,octa-cis-undecaprenyl diphosphate + H(+). The protein operates within cell wall biogenesis; peptidoglycan biosynthesis. Peptidoglycan polymerase that is essential for cell division. This is Probable peptidoglycan glycosyltransferase FtsW from Allochromatium vinosum (strain ATCC 17899 / DSM 180 / NBRC 103801 / NCIMB 10441 / D) (Chromatium vinosum).